A 322-amino-acid chain; its full sequence is Putative heme-binding peroxidase (322 aa).

Catalysis depends on histidine 38, which acts as the Proton acceptor. Histidine 162 lines the heme b pocket. The Tryptophan radical intermediate role is filled by tryptophan 178. Residues 288 to 322 (ISAPKKSNHPTGPAKGAQGGCPVAASQGGCPRAKL) are disordered.

The protein belongs to the peroxidase family. Cytochrome c peroxidase subfamily. Heme b serves as cofactor.

Its function is as follows. Destroys radicals which are normally produced within the cells and which are toxic to biological systems. In Aspergillus fumigatus (strain ATCC MYA-4609 / CBS 101355 / FGSC A1100 / Af293) (Neosartorya fumigata), this protein is Putative heme-binding peroxidase.